Consider the following 333-residue polypeptide: Ketoreductase sphI (333 aa).

Residue Y167 participates in NADP(+) binding.

Belongs to the NAD(P)-dependent epimerase/dehydratase family. Dihydroflavonol-4-reductase subfamily.

Functionally, ketoreductase; part of the gene cluster that mediates the biosynthesis of sphingofungins, bioactive molecules acting as sphingolipid inhibitors via inhibiting serine palmitoyl transferase (SPT). Does not seem to be involved in any biosynthetic process leading to the production of sphingofungins, but might be connected to a regulation or resistance mechanism. This chain is Ketoreductase sphI, found in Aspergillus fumigatus (strain CBS 144.89 / FGSC A1163 / CEA10) (Neosartorya fumigata).